Consider the following 560-residue polypeptide: DNA-directed primase/polymerase protein (560 aa).

Residues 1–22 (MNRKWEAKLKQIEERASHYERK) adopt a coiled-coil conformation. Residues Arg-76, 114-116 (DLE), and 165-169 (KFSRH) each bind substrate. 2 residues coordinate Mn(2+): Asp-114 and Glu-116. Residues 203 to 223 (EDDDSAPETTGHGFPHFSEAP) are disordered. Ser-255 is subject to Phosphoserine. Residues 288–291 (RNFR) and Lys-297 each bind substrate. Cys-419, His-426, Cys-446, and Cys-451 together coordinate Zn(2+). Positions 419-452 (CENIGRAHKSNNIMILVDLKNEVWYQKCHDPVCK) match the Zinc knuckle motif motif. Residues 480-507 (TTDEADETRSNETQNPHKPSPSRLSTGA) are disordered. The interval 481 to 560 (TDEADETRSN…DELIIEVLQE (80 aa)) is interaction with RPA1. Over residues 490–507 (NETQNPHKPSPSRLSTGA) the composition is skewed to polar residues. 2 consecutive short sequence motifs (RPA1-binding motif) follow at residues 513-527 (WDNG…EATE) and 548-556 (EIPDELIIE).

This sequence belongs to the eukaryotic-type primase small subunit family. In terms of assembly, interacts with RPA1; leading to recruitment to chromatin and stimulate DNA primase activity. Interacts with SSBP1. Interacts with POLDIP2; leading to enhance DNA polymerase activity. The cofactor is Mn(2+).

It localises to the nucleus. It is found in the mitochondrion matrix. The protein localises to the chromosome. The catalysed reaction is ssDNA + n NTP = ssDNA/pppN(pN)n-1 hybrid + (n-1) diphosphate.. The enzyme catalyses DNA(n) + a 2'-deoxyribonucleoside 5'-triphosphate = DNA(n+1) + diphosphate. In terms of biological role, DNA primase and DNA polymerase required to tolerate replication-stalling lesions by bypassing them. Required to facilitate mitochondrial and nuclear replication fork progression by initiating de novo DNA synthesis using dNTPs and acting as an error-prone DNA polymerase able to bypass certain DNA lesions. Shows a high capacity to tolerate DNA damage lesions such as 8oxoG and abasic sites in DNA. Provides different translesion synthesis alternatives when DNA replication is stalled: able to synthesize DNA primers downstream of lesions, such as ultraviolet (UV) lesions, R-loops and G-quadruplexes, to allow DNA replication to continue. Can also realign primers ahead of 'unreadable lesions' such as abasic sites and 6-4 photoproduct (6-4 pyrimidine-pyrimidinone), thereby skipping the lesion. Repriming avoids fork degradation while leading to accumulation of internal ssDNA gaps behind the forks. Also able to incorporate nucleotides opposite DNA lesions such as 8oxoG, like a regular translesion synthesis DNA polymerase. Also required for reinitiating stalled forks after UV damage during nuclear DNA replication. Required for mitochondrial DNA (mtDNA) synthesis and replication, by reinitiating synthesis after UV damage or in the presence of chain-terminating nucleotides. Prevents APOBEC family-mediated DNA mutagenesis by repriming downstream of abasic site to prohibit error-prone translesion synthesis. Has non-overlapping function with POLH. In addition to its role in DNA damage response, also required to maintain efficient nuclear and mitochondrial DNA replication in unperturbed cells. In Homo sapiens (Human), this protein is DNA-directed primase/polymerase protein.